A 185-amino-acid chain; its full sequence is Ribose 1,5-bisphosphate phosphokinase PhnN (185 aa).

10–17 (GPSGSGKD) is a binding site for ATP.

It belongs to the ribose 1,5-bisphosphokinase family.

The catalysed reaction is alpha-D-ribose 1,5-bisphosphate + ATP = 5-phospho-alpha-D-ribose 1-diphosphate + ADP. The protein operates within metabolic intermediate biosynthesis; 5-phospho-alpha-D-ribose 1-diphosphate biosynthesis; 5-phospho-alpha-D-ribose 1-diphosphate from D-ribose 5-phosphate (route II): step 3/3. In terms of biological role, catalyzes the phosphorylation of ribose 1,5-bisphosphate to 5-phospho-D-ribosyl alpha-1-diphosphate (PRPP). The polypeptide is Ribose 1,5-bisphosphate phosphokinase PhnN (Shigella dysenteriae serotype 1 (strain Sd197)).